Reading from the N-terminus, the 160-residue chain is uncharacterized protein (160 aa).

The first 27 residues, 1–27 (MVIGRKAGIIIYVMHALLLLLLSFTFA), serve as a signal peptide directing secretion.

This is an uncharacterized protein from Aquifex aeolicus (strain VF5).